Consider the following 415-residue polypeptide: Probable carboxypeptidase ACLA_013260 (415 aa).

Positions 1 to 17 are cleaved as a signal peptide; it reads MKFPWLLLVKGAASVAA. A glycan (N-linked (GlcNAc...) asparagine) is linked at asparagine 97. Residue aspartate 145 coordinates Zn(2+). Glutamate 177 acts as the Proton acceptor in catalysis. Zn(2+) is bound at residue glutamate 178. An N-linked (GlcNAc...) asparagine glycan is attached at asparagine 271.

The protein belongs to the peptidase M20A family. The cofactor is Zn(2+).

The protein localises to the secreted. This is Probable carboxypeptidase ACLA_013260 from Aspergillus clavatus (strain ATCC 1007 / CBS 513.65 / DSM 816 / NCTC 3887 / NRRL 1 / QM 1276 / 107).